A 144-amino-acid chain; its full sequence is Superoxide dismutase [Mn] 1 (144 aa).

Residues H42, D124, and H128 each coordinate Mn(2+).

The protein belongs to the iron/manganese superoxide dismutase family. Mn(2+) is required as a cofactor.

It catalyses the reaction 2 superoxide + 2 H(+) = H2O2 + O2. Functionally, destroys superoxide anion radicals which are normally produced within the cells and which are toxic to biological systems. The chain is Superoxide dismutase [Mn] 1 (sod1) from Haloferax mediterranei (Halobacterium mediterranei).